Here is a 137-residue protein sequence, read N- to C-terminus: Large ribosomal subunit protein uL16 (137 aa).

The protein belongs to the universal ribosomal protein uL16 family. In terms of assembly, part of the 50S ribosomal subunit.

Its function is as follows. Binds 23S rRNA and is also seen to make contacts with the A and possibly P site tRNAs. The polypeptide is Large ribosomal subunit protein uL16 (Paracoccus denitrificans (strain Pd 1222)).